A 456-amino-acid polypeptide reads, in one-letter code: Enolase (456 aa).

Position 164 (Q164) interacts with (2R)-2-phosphoglycerate. The Proton donor role is filled by E207. Residues D244, E287, and D314 each coordinate Mg(2+). Residues K339, R368, S369, and K390 each coordinate (2R)-2-phosphoglycerate. The Proton acceptor role is filled by K339.

It belongs to the enolase family. As to quaternary structure, component of the RNA degradosome, a multiprotein complex involved in RNA processing and mRNA degradation. Requires Mg(2+) as cofactor.

The protein localises to the cytoplasm. It is found in the secreted. The protein resides in the cell surface. The enzyme catalyses (2R)-2-phosphoglycerate = phosphoenolpyruvate + H2O. It functions in the pathway carbohydrate degradation; glycolysis; pyruvate from D-glyceraldehyde 3-phosphate: step 4/5. Catalyzes the reversible conversion of 2-phosphoglycerate (2-PG) into phosphoenolpyruvate (PEP). It is essential for the degradation of carbohydrates via glycolysis. This Francisella tularensis subsp. tularensis (strain FSC 198) protein is Enolase.